The chain runs to 172 residues: Biogenesis of lysosome-related organelles complex 1 subunit 6 (172 aa).

2 disordered regions span residues 1-36 (MSVP…SPDE) and 135-172 (RALK…AKRM). Positions 63 to 167 (DLQRSKQALQ…FEREKQLTAR (105 aa)) form a coiled coil. A compositionally biased stretch (basic and acidic residues) spans 143–164 (RQKEELEREQQREKEFEREKQL).

It belongs to the BLOC1S6 family. Interacts with BLOC1S4 and DTNBP1/BLOC1S7. Homodimer. Component of the biogenesis of lysosome-related organelles complex 1 (BLOC-1) composed of BLOC1S1, BLOC1S2, BLOC1S3, BLOC1S4, BLOC1S5, BLOC1S6, DTNBP1/BLOC1S7 and SNAPIN/BLOC1S8. Octamer composed of one copy each BLOC1S1, BLOC1S2, BLOC1S3, BLOC1S4, BLOC1S5, BLOC1S6, DTNBP1/BLOC1S7 and SNAPIN/BLOC1S8. The BLOC-1 complex associates with the AP-3 protein complex and membrane protein cargos. Interacts with BLOC1S5, F-actin, SNAP25 isoform 1 and isoform 2, SNAP47 and STX12. Phosphorylated. As to expression, widely expressed.

It localises to the cytoplasm. The protein localises to the membrane. Its function is as follows. Component of the BLOC-1 complex, a complex that is required for normal biogenesis of lysosome-related organelles (LRO), such as platelet dense granules and melanosomes. In concert with the AP-3 complex, the BLOC-1 complex is required to target membrane protein cargos into vesicles assembled at cell bodies for delivery into neurites and nerve terminals. The BLOC-1 complex, in association with SNARE proteins, is also proposed to be involved in neurite extension. May play a role in intracellular vesicle trafficking, particularly in the vesicle-docking and fusion process. The polypeptide is Biogenesis of lysosome-related organelles complex 1 subunit 6 (BLOC1S6) (Homo sapiens (Human)).